Here is a 156-residue protein sequence, read N- to C-terminus: Ribosomal RNA large subunit methyltransferase H (156 aa).

S-adenosyl-L-methionine-binding positions include leucine 73, glycine 104, and 123–128 (LSSLTL).

It belongs to the RNA methyltransferase RlmH family. As to quaternary structure, homodimer.

The protein resides in the cytoplasm. The enzyme catalyses pseudouridine(1915) in 23S rRNA + S-adenosyl-L-methionine = N(3)-methylpseudouridine(1915) in 23S rRNA + S-adenosyl-L-homocysteine + H(+). Specifically methylates the pseudouridine at position 1915 (m3Psi1915) in 23S rRNA. This Neisseria meningitidis serogroup C / serotype 2a (strain ATCC 700532 / DSM 15464 / FAM18) protein is Ribosomal RNA large subunit methyltransferase H.